The following is a 412-amino-acid chain: Clamp protein VP6 (412 aa).

Belongs to the reoviridae clamp protein family. In terms of assembly, interacts with capsid proteins VP3, VP5 and VP7.

It localises to the virion. Functionally, located at the interface of the incomplete T=13 outer capsid and the pseudo T=2 inner capsid, 120 VP6 subunits clamp and stabilizes the inner capsid shell. The protein is Clamp protein VP6 (S8) of Aquareovirus C (isolate Golden shiner/USA/GSRV/1977) (AQRV-C).